A 165-amino-acid chain; its full sequence is Ribosome maturation factor RimM (165 aa).

The region spanning glutamate 94–alanine 165 is the PRC barrel domain.

Belongs to the RimM family. Binds ribosomal protein uS19.

Its subcellular location is the cytoplasm. In terms of biological role, an accessory protein needed during the final step in the assembly of 30S ribosomal subunit, possibly for assembly of the head region. Essential for efficient processing of 16S rRNA. May be needed both before and after RbfA during the maturation of 16S rRNA. It has affinity for free ribosomal 30S subunits but not for 70S ribosomes. The sequence is that of Ribosome maturation factor RimM from Rickettsia conorii (strain ATCC VR-613 / Malish 7).